The sequence spans 884 residues: Valine--tRNA ligase (884 aa).

Residues 46-56 (PNVTGKLHLGH) carry the 'HIGH' region motif. The short motif at 520 to 524 (KMSKS) is the 'KMSKS' region element. Position 523 (Lys-523) interacts with ATP. Residues 809-844 (LADLLNVEEELARLEKELAKWQKELNMVGKKLSNER) are a coiled coil.

The protein belongs to the class-I aminoacyl-tRNA synthetase family. ValS type 1 subfamily. In terms of assembly, monomer.

It localises to the cytoplasm. The catalysed reaction is tRNA(Val) + L-valine + ATP = L-valyl-tRNA(Val) + AMP + diphosphate. Catalyzes the attachment of valine to tRNA(Val). As ValRS can inadvertently accommodate and process structurally similar amino acids such as threonine, to avoid such errors, it has a 'posttransfer' editing activity that hydrolyzes mischarged Thr-tRNA(Val) in a tRNA-dependent manner. The sequence is that of Valine--tRNA ligase from Streptococcus agalactiae serotype Ia (strain ATCC 27591 / A909 / CDC SS700).